A 95-amino-acid polypeptide reads, in one-letter code: YcgL domain-containing protein Sden_1630 (95 aa).

In terms of domain architecture, YcgL spans 1-85 (MICTVYKSRR…PKANLLEEHK (85 aa)).

In Shewanella denitrificans (strain OS217 / ATCC BAA-1090 / DSM 15013), this protein is YcgL domain-containing protein Sden_1630.